We begin with the raw amino-acid sequence, 228 residues long: NOI-like protein (228 aa).

Positions 56–75 (AQDHQHSEKHHNDTSTDYHV) are enriched in basic and acidic residues. 2 disordered regions span residues 56 to 87 (AQDH…HRRE) and 99 to 133 (RPHR…RNSD). The segment covering 76 to 86 (VKQHRRKHHRR) has biased composition (basic residues). Residues 118–133 (HGTSATMSSSVKRNSD) show a composition bias toward polar residues.

Belongs to the RIN4 family.

The polypeptide is NOI-like protein (Elaeis oleifera (American oil palm)).